A 328-amino-acid polypeptide reads, in one-letter code: Phenylalanine--tRNA ligase alpha subunit (328 aa).

Glu245 contributes to the Mg(2+) binding site.

The protein belongs to the class-II aminoacyl-tRNA synthetase family. Phe-tRNA synthetase alpha subunit type 1 subfamily. Tetramer of two alpha and two beta subunits. Mg(2+) is required as a cofactor.

It localises to the cytoplasm. It catalyses the reaction tRNA(Phe) + L-phenylalanine + ATP = L-phenylalanyl-tRNA(Phe) + AMP + diphosphate + H(+). This is Phenylalanine--tRNA ligase alpha subunit from Helicobacter pylori (strain G27).